A 603-amino-acid polypeptide reads, in one-letter code: Myotubularin (603 aa).

A compositionally biased stretch (polar residues) spans Met-1–Ser-13. The disordered stretch occupies residues Met-1–Asp-25. A phosphoserine mark is found at Ser-13 and Ser-18. The span at Leu-14–Asp-25 shows a compositional bias: basic and acidic residues. A GRAM domain is found at Arg-29–Gly-97. The region spanning Gly-163–Tyr-538 is the Myotubularin phosphatase domain. Residues Asn-288, Asn-313, and Ile-314 each coordinate a 1,2-diacyl-sn-glycero-3-phospho-(1D-myo-inositol-3,5-bisphosphate). Asn-288, Asn-313, and Ile-314 together coordinate a 1,2-diacyl-sn-glycero-3-phospho-(1D-myo-inositol-3-phosphate). Residue Cys-375 is the Phosphocysteine intermediate of the active site. A 1,2-diacyl-sn-glycero-3-phospho-(1D-myo-inositol-3,5-bisphosphate) contacts are provided by Ser-376, Asp-377, Gly-378, Trp-379, Asp-380, Arg-381, Lys-417, and Arg-421. 6 residues coordinate a 1,2-diacyl-sn-glycero-3-phospho-(1D-myo-inositol-3-phosphate): Ser-376, Asp-377, Gly-378, Trp-379, Asp-380, and Arg-381. Residue Arg-421 coordinates a 1,2-diacyl-sn-glycero-3-phospho-(1D-myo-inositol-3-phosphate). The residue at position 495 (Thr-495) is a Phosphothreonine. Residues Ser-579–Phe-603 form a disordered region. At Ser-588 the chain carries Phosphoserine.

This sequence belongs to the protein-tyrosine phosphatase family. Non-receptor class myotubularin subfamily. In terms of assembly, heterodimer with MTMR12. Interacts with KMT2A/MLL1 (via SET domain). Interacts with DES in skeletal muscle but not in cardiac muscle. Interacts with SPEG.

Its subcellular location is the cytoplasm. The protein resides in the cell membrane. The protein localises to the cell projection. It localises to the filopodium. It is found in the ruffle. Its subcellular location is the late endosome. The protein resides in the myofibril. The protein localises to the sarcomere. The catalysed reaction is a 1,2-diacyl-sn-glycero-3-phospho-(1D-myo-inositol-3-phosphate) + H2O = a 1,2-diacyl-sn-glycero-3-phospho-(1D-myo-inositol) + phosphate. It catalyses the reaction a 1,2-diacyl-sn-glycero-3-phospho-(1D-myo-inositol-3,5-bisphosphate) + H2O = a 1,2-diacyl-sn-glycero-3-phospho-(1D-myo-inositol-5-phosphate) + phosphate. The enzyme catalyses 1,2-dioctanoyl-sn-glycero-3-phospho-(1-D-myo-inositol-3-phosphate) + H2O = 1,2-dioctanoyl-sn-glycero-3-phospho-(1D-myo-inositol) + phosphate. It carries out the reaction 1,2-dioctanoyl-sn-glycero-3-phospho-(1D-myo-inositol-3,5-bisphosphate) + H2O = 1,2-dioctanoyl-sn-glycero-3-phospho-(1D-myo-inositol-5-phosphate) + phosphate. The catalysed reaction is 1,2-dihexadecanoyl-sn-glycero-3-phospho-(1D-myo-inositol-3,5-phosphate) + H2O = 1,2-dihexadecanoyl-sn-glycero-3-phospho-(1D-myo-inositol-5-phosphate) + phosphate. With respect to regulation, allosterically activated by phosphatidylinositol 5-phosphate (PI5P). Lipid phosphatase which dephosphorylates phosphatidylinositol 3-monophosphate (PI3P) and phosphatidylinositol 3,5-bisphosphate (PI(3,5)P2). Has also been shown to dephosphorylate phosphotyrosine- and phosphoserine-containing peptides. Negatively regulates EGFR degradation through regulation of EGFR trafficking from the late endosome to the lysosome. Plays a role in vacuolar formation and morphology. Regulates desmin intermediate filament assembly and architecture. Plays a role in mitochondrial morphology and positioning. Required for skeletal muscle maintenance but not for myogenesis. In skeletal muscles, stabilizes MTMR12 protein levels. This is Myotubularin from Pongo abelii (Sumatran orangutan).